The primary structure comprises 156 residues: Ribosome maturation factor RimP (156 aa).

It belongs to the RimP family.

It localises to the cytoplasm. Required for maturation of 30S ribosomal subunits. The sequence is that of Ribosome maturation factor RimP from Treponema pallidum (strain Nichols).